The chain runs to 694 residues: Elongation factor G (694 aa).

The tr-type G domain occupies 8–285 (EKVRNIGIAA…AVVELLPSPQ (278 aa)). Residues 17 to 24 (AHIDAGKT), 81 to 85 (DTPGH), and 135 to 138 (NKMD) contribute to the GTP site.

It belongs to the TRAFAC class translation factor GTPase superfamily. Classic translation factor GTPase family. EF-G/EF-2 subfamily.

It is found in the cytoplasm. In terms of biological role, catalyzes the GTP-dependent ribosomal translocation step during translation elongation. During this step, the ribosome changes from the pre-translocational (PRE) to the post-translocational (POST) state as the newly formed A-site-bound peptidyl-tRNA and P-site-bound deacylated tRNA move to the P and E sites, respectively. Catalyzes the coordinated movement of the two tRNA molecules, the mRNA and conformational changes in the ribosome. The sequence is that of Elongation factor G (fusA) from Synechococcus sp. (strain ATCC 27144 / PCC 6301 / SAUG 1402/1) (Anacystis nidulans).